Consider the following 375-residue polypeptide: MAFTMRAPAPRATAQSRVTANRARRSLVVRADKDKTVVIGLAADSGCGKSTFMRRMTSIFGGVPKPPAGGNPDSNTLISDMTTVICLDDYHCLDRNGRKVKGVTALAPEAQNFDLMYNQVKALKEGKSVDKPIYNHVSGLIDAPEKIESPPILVIEGLHPFYDKRVAELLDFKIYLDISDDIKFAWKIQRDMAERGHSLESIKSSIAARKPDFDAYIDPQKKDADMIIQVLPTQLVPDDKGQYLRVRLIMKEGSKMFDPVYLFDEGSTISWIPCGRKLTCSFPGIKMFYGPDTWYGQEVSVLEMDGQFDKLEELIYVESHLSNTSAKFYGEITQQMLKNSGFPGSNNGTGLFQTIVGLKVREVYERIVKKDVVPV.

Residues 1–31 (MAFTMRAPAPRATAQSRVTANRARRSLVVRA) constitute a chloroplast transit peptide. C47 and C86 form a disulfide bridge.

This sequence belongs to the phosphoribulokinase family. In terms of assembly, component of a complex that contains two dimers of PRK, two tetramers of GAPDH and CP12.

The protein resides in the plastid. It is found in the chloroplast. The catalysed reaction is D-ribulose 5-phosphate + ATP = D-ribulose 1,5-bisphosphate + ADP + H(+). The protein operates within carbohydrate biosynthesis; Calvin cycle. Its activity is regulated as follows. Light regulated via thioredoxin by reversible oxidation/reduction of sulfhydryl/disulfide groups. The polypeptide is Phosphoribulokinase, chloroplastic (PRKA) (Chlamydomonas reinhardtii (Chlamydomonas smithii)).